A 254-amino-acid chain; its full sequence is Trans-aconitate 2-methyltransferase (254 aa).

The protein belongs to the methyltransferase superfamily. Tam family.

The protein resides in the cytoplasm. It catalyses the reaction trans-aconitate + S-adenosyl-L-methionine = (E)-3-(methoxycarbonyl)pent-2-enedioate + S-adenosyl-L-homocysteine. Functionally, catalyzes the S-adenosylmethionine monomethyl esterification of trans-aconitate. This is Trans-aconitate 2-methyltransferase from Mycobacterium sp. (strain JLS).